Here is a 139-residue protein sequence, read N- to C-terminus: PTGSGVVGLSMAGSSALILAAYHPDQFVYSGSLSALLDPSQGMGPSLIGLAMGDAGGYKASDMWGPKDDPAWARNDPMLQVGKLVANNTRIWVYCGNGKPSDLGGDNLPAKFLEGFVRTSNMKFQAAYNAAGGHNAVWN.

The Nucleophile role is filled by serine 10. Residues serine 10 and aspartate 38 each contribute to the substrate site. Residue glutamate 114 is part of the active site. Residues 116-119 (FVRT) and lysine 123 contribute to the substrate site.

The protein belongs to the mycobacterial A85 antigen family. In terms of assembly, homodimer.

It localises to the secreted. It is found in the cell wall. The protein resides in the cytoplasm. It carries out the reaction an acyl-CoA + a 1,2-diacyl-sn-glycerol = a triacyl-sn-glycerol + CoA. The enzyme catalyses 2 alpha,alpha'-trehalose 6-mycolate = alpha,alpha'-trehalose 6,6'-bismycolate + alpha,alpha-trehalose. The antigen 85 proteins (FbpA, FbpB, FbpC) are responsible for the high affinity of mycobacteria for fibronectin, a large adhesive glycoprotein, which facilitates the attachment of M.tuberculosis to murine alveolar macrophages (AMs). They also help to maintain the integrity of the cell wall by catalyzing the transfer of mycolic acids to cell wall arabinogalactan, and through the synthesis of alpha,alpha-trehalose dimycolate (TDM, cord factor). They catalyze the transfer of a mycoloyl residue from one molecule of alpha,alpha-trehalose monomycolate (TMM) to another TMM, leading to the formation of TDM. FbpA mediates triacylglycerol (TAG) formation with long-chain acyl-CoA as the acyl donor and 1,2-dipalmitoyl-sn-glycerol (1,2-dipalmitin) as the acyl acceptor. It has a preference for C26:0-CoA over C18:1-CoA. In Mycobacterium marinum, this protein is Diacylglycerol acyltransferase/mycolyltransferase Ag85A (fbpA).